The primary structure comprises 382 residues: Chorismate synthase (382 aa).

NADP(+) is bound by residues R39 and R45. Residues 127–129 (RAS), 245–246 (QA), G290, 305–309 (KPIPT), and R331 each bind FMN.

Belongs to the chorismate synthase family. Homotetramer. Requires FMNH2 as cofactor.

It catalyses the reaction 5-O-(1-carboxyvinyl)-3-phosphoshikimate = chorismate + phosphate. The protein operates within metabolic intermediate biosynthesis; chorismate biosynthesis; chorismate from D-erythrose 4-phosphate and phosphoenolpyruvate: step 7/7. Functionally, catalyzes the anti-1,4-elimination of the C-3 phosphate and the C-6 proR hydrogen from 5-enolpyruvylshikimate-3-phosphate (EPSP) to yield chorismate, which is the branch point compound that serves as the starting substrate for the three terminal pathways of aromatic amino acid biosynthesis. This reaction introduces a second double bond into the aromatic ring system. The sequence is that of Chorismate synthase from Desulfitobacterium hafniense (strain Y51).